Here is a 382-residue protein sequence, read N- to C-terminus: Pyrimidine monooxygenase RutA (382 aa).

FMN is bound by residues 68–69, N134, E143, 159–160, and S209; these read IK and RY.

This sequence belongs to the NtaA/SnaA/DszA monooxygenase family. RutA subfamily.

The enzyme catalyses uracil + FMNH2 + NADH + O2 = (Z)-3-ureidoacrylate + FMN + NAD(+) + H2O + H(+). It carries out the reaction thymine + FMNH2 + NADH + O2 = (Z)-2-methylureidoacrylate + FMN + NAD(+) + H2O + H(+). Functionally, catalyzes the pyrimidine ring opening between N-3 and C-4 by an unusual flavin hydroperoxide-catalyzed mechanism, adding oxygen atoms in the process to yield ureidoacrylate peracid, that immediately reacts with FMN forming ureidoacrylate and FMN-N(5)-oxide. The FMN-N(5)-oxide reacts spontaneously with NADH to produce FMN. Requires the flavin reductase RutF to regenerate FMN in vivo. This Escherichia coli (strain K12 / MC4100 / BW2952) protein is Pyrimidine monooxygenase RutA.